Consider the following 114-residue polypeptide: Large ribosomal subunit protein uL22 (114 aa).

It belongs to the universal ribosomal protein uL22 family. In terms of assembly, part of the 50S ribosomal subunit.

Its function is as follows. This protein binds specifically to 23S rRNA; its binding is stimulated by other ribosomal proteins, e.g. L4, L17, and L20. It is important during the early stages of 50S assembly. It makes multiple contacts with different domains of the 23S rRNA in the assembled 50S subunit and ribosome. In terms of biological role, the globular domain of the protein is located near the polypeptide exit tunnel on the outside of the subunit, while an extended beta-hairpin is found that lines the wall of the exit tunnel in the center of the 70S ribosome. The sequence is that of Large ribosomal subunit protein uL22 from Ehrlichia ruminantium (strain Gardel).